We begin with the raw amino-acid sequence, 338 residues long: Solute carrier family 35 member G5 (338 aa).

Residues 1-28 (MAGSHPYFNLPDSTHPSPPSGPPSLRWH) are disordered. 9 helical membrane-spanning segments follow: residues 37–57 (TNGLLVALLGGGLPAGFVGPL), 67–87 (LPSLELLICRCLFHLPIALLL), 105–125 (CFCALLNVLSIGCAYSAVQVV), 160–180 (CGLLGSILGLIIIVGPGLWTL), 190–210 (ALGYVQAFLGGLALSLGLLVY), 221–241 (TVAFLSGLVGLLGSVPGLFVL), 250–270 (LLSWSCVGAVGILTLVSFTCV), 281–301 (LVCAVLHSEVVVALILQYYML), and 310–330 (IMGAGVVLGNITIIPAWNLSC). In terms of domain architecture, EamA 1 spans 49–174 (LPAGFVGPLS…SILGLIIIVG (126 aa)). One can recognise an EamA 2 domain in the interval 272 to 325 (YAVTKAHPALVCAVLHSEVVVALILQYYMLPETVAPSDIMGAGVVLGNITIIPA).

This sequence belongs to the SLC35G solute transporter family.

The protein localises to the membrane. The protein is Solute carrier family 35 member G5 (SLC35G5) of Gorilla gorilla gorilla (Western lowland gorilla).